Here is a 957-residue protein sequence, read N- to C-terminus: Glycine dehydrogenase (decarboxylating) (957 aa).

Lys-708 bears the N6-(pyridoxal phosphate)lysine mark.

The protein belongs to the GcvP family. The glycine cleavage system is composed of four proteins: P, T, L and H. The cofactor is pyridoxal 5'-phosphate.

It carries out the reaction N(6)-[(R)-lipoyl]-L-lysyl-[glycine-cleavage complex H protein] + glycine + H(+) = N(6)-[(R)-S(8)-aminomethyldihydrolipoyl]-L-lysyl-[glycine-cleavage complex H protein] + CO2. In terms of biological role, the glycine cleavage system catalyzes the degradation of glycine. The P protein binds the alpha-amino group of glycine through its pyridoxal phosphate cofactor; CO(2) is released and the remaining methylamine moiety is then transferred to the lipoamide cofactor of the H protein. This chain is Glycine dehydrogenase (decarboxylating), found in Salmonella agona (strain SL483).